The primary structure comprises 225 residues: Endonuclease V (225 aa).

The Mg(2+) site is built by D43 and D110. 2 interaction with target DNA regions span residues K139–R141 and H214–K221.

Belongs to the endonuclease V family. Requires Mg(2+) as cofactor.

Its subcellular location is the cytoplasm. It carries out the reaction Endonucleolytic cleavage at apurinic or apyrimidinic sites to products with a 5'-phosphate.. Functionally, DNA repair enzyme involved in the repair of deaminated bases. Selectively cleaves double-stranded DNA at the second phosphodiester bond 3' to a deoxyinosine leaving behind the intact lesion on the nicked DNA. In vitro, can also cleave single-stranded substrates with inosine, double-stranded DNA with apurinic sites, or DNA sites with uracil or a mismatched base. When present in molar excess, two protein molecules can bind to the same DNA substrate and effect cleavage of both strands (in vitro). The protein is Endonuclease V of Thermotoga maritima (strain ATCC 43589 / DSM 3109 / JCM 10099 / NBRC 100826 / MSB8).